Consider the following 259-residue polypeptide: Type III pantothenate kinase (259 aa).

Residue Asp-6–Val-13 participates in ATP binding. Gly-107–Arg-110 contacts substrate. Asp-109 serves as the catalytic Proton acceptor. Asp-129 is a K(+) binding site. Thr-132 is a binding site for ATP. A substrate-binding site is contributed by Thr-184.

This sequence belongs to the type III pantothenate kinase family. As to quaternary structure, homodimer. The cofactor is NH4(+). K(+) serves as cofactor.

The protein resides in the cytoplasm. It catalyses the reaction (R)-pantothenate + ATP = (R)-4'-phosphopantothenate + ADP + H(+). Its pathway is cofactor biosynthesis; coenzyme A biosynthesis; CoA from (R)-pantothenate: step 1/5. In terms of biological role, catalyzes the phosphorylation of pantothenate (Pan), the first step in CoA biosynthesis. This Ruegeria pomeroyi (strain ATCC 700808 / DSM 15171 / DSS-3) (Silicibacter pomeroyi) protein is Type III pantothenate kinase.